The following is a 246-amino-acid chain: Complement C1q tumor necrosis factor-related protein 3 (246 aa).

The signal sequence occupies residues 1–22 (MLGRQRIWWHLLPLLFLPFCLC). Residues 51–113 (GYQGPPGPPG…KGEKGYPGVP (63 aa)) form the Collagen-like domain. The segment at 53–112 (QGPPGPPGPPGIPGNHGNNGNNGATGHEGAKGEKGDKGDLGPRGERGQHGPKGEKGYPGV) is disordered. The span at 55-64 (PPGPPGPPGI) shows a compositional bias: pro residues. Over residues 65 to 74 (PGNHGNNGNN) the composition is skewed to low complexity. Over residues 80 to 107 (EGAKGEKGDKGDLGPRGERGQHGPKGEK) the composition is skewed to basic and acidic residues. Residues 113-246 (PPELQIAFMA…FAGFLLFETK (134 aa)) form the C1q domain.

The protein localises to the secreted. The protein is Complement C1q tumor necrosis factor-related protein 3 (C1qtnf3) of Mus musculus (Mouse).